The chain runs to 519 residues: Cytochrome P450 52A13 (519 aa).

Residue C466 coordinates heme.

The protein belongs to the cytochrome P450 family. Heme serves as cofactor.

It localises to the membrane. In terms of biological role, together with an NADPH cytochrome P450 the enzyme system catalyzes the terminal hydroxylation as the first step in the assimilation of alkanes and fatty acids. This is Cytochrome P450 52A13 (CYP52A13) from Debaryomyces hansenii (Yeast).